The primary structure comprises 333 residues: Cilia- and flagella-associated protein 119 (333 aa).

Positions 1-10 (MITPSSSQSL) are enriched in polar residues. Disordered stretches follow at residues 1-70 (MITP…ANLF) and 309-333 (RLSS…TKTK). S34 bears the Phosphoserine mark. Residues 44 to 58 (TDMQTESPAEATSSP) are compositionally biased toward polar residues. Residues 284 to 319 (IKSQLSKELRQLQQLVEERLKESEERLSSKLAALEQ) adopt a coiled-coil conformation.

It localises to the cell projection. It is found in the cilium. The protein localises to the flagellum. The protein resides in the cytoplasmic vesicle. Its subcellular location is the secretory vesicle. It localises to the acrosome. It is found in the cytoplasm. In Mus musculus (Mouse), this protein is Cilia- and flagella-associated protein 119.